We begin with the raw amino-acid sequence, 617 residues long: Regulatory solute carrier protein family 1 member 1 (617 aa).

Residues 1 to 22 are compositionally biased toward polar residues; sequence MSSLPTSDGFNHPARSSGQSPD. Disordered stretches follow at residues 1 to 106, 155 to 181, and 217 to 237; these read MSSL…EITV, ENQNLSQVSDPQQHEEPGNEQYEVAQQ, and KGNGLPQNVDPPSAKKSIPSS. 2 stretches are compositionally biased toward basic and acidic residues: residues 43–52 and 66–83; these read SDSDRIEPKA and SEKKEHLSLQDLSDHASS. Composition is skewed to polar residues over residues 89–103 and 155–165; these read TDQSPAMPMQNSSEE and ENQNLSQVSDP. The segment at 410–412 is involved in post-transcriptional down-regulation of SLC5A1; it reads QCP. The UBA domain occupies 571–611; the sequence is IFPATDIDRILRAGFTLQEALGALHRVGGNADLALLVLLAK.

In terms of assembly, interacts with YRDC. In terms of tissue distribution, expressed in small intestine, kidney and brain.

Its subcellular location is the cell membrane. It is found in the nucleus. The protein localises to the golgi apparatus. It localises to the trans-Golgi network. In terms of biological role, mediates transcriptional and post-transcriptional regulation of SLC5A1. Inhibits a dynamin and PKC-dependent exocytotic pathway of SLC5A1. Also involved in transcriptional regulation of SLC22A2. Exhibits glucose-dependent, short-term inhibition of SLC5A1 and SLC22A2 by inhibiting the release of vesicles from the trans-Golgi network. The chain is Regulatory solute carrier protein family 1 member 1 (RSC1A1) from Homo sapiens (Human).